A 501-amino-acid polypeptide reads, in one-letter code: L-arabinose isomerase (501 aa).

Mn(2+)-binding residues include Glu-306, Glu-333, His-350, and His-450.

It belongs to the arabinose isomerase family. As to quaternary structure, homohexamer. Requires Mn(2+) as cofactor.

It catalyses the reaction beta-L-arabinopyranose = L-ribulose. It functions in the pathway carbohydrate degradation; L-arabinose degradation via L-ribulose; D-xylulose 5-phosphate from L-arabinose (bacterial route): step 1/3. Catalyzes the conversion of L-arabinose to L-ribulose. The chain is L-arabinose isomerase from Pectobacterium atrosepticum (strain SCRI 1043 / ATCC BAA-672) (Erwinia carotovora subsp. atroseptica).